Reading from the N-terminus, the 495-residue chain is Glutamyl-tRNA(Gln) amidotransferase subunit A (495 aa).

Active-site charge relay system residues include K78 and S159. Catalysis depends on S183, which acts as the Acyl-ester intermediate.

This sequence belongs to the amidase family. GatA subfamily. In terms of assembly, heterotrimer of A, B and C subunits.

The catalysed reaction is L-glutamyl-tRNA(Gln) + L-glutamine + ATP + H2O = L-glutaminyl-tRNA(Gln) + L-glutamate + ADP + phosphate + H(+). In terms of biological role, allows the formation of correctly charged Gln-tRNA(Gln) through the transamidation of misacylated Glu-tRNA(Gln) in organisms which lack glutaminyl-tRNA synthetase. The reaction takes place in the presence of glutamine and ATP through an activated gamma-phospho-Glu-tRNA(Gln). The polypeptide is Glutamyl-tRNA(Gln) amidotransferase subunit A (Rhizorhabdus wittichii (strain DSM 6014 / CCUG 31198 / JCM 15750 / NBRC 105917 / EY 4224 / RW1) (Sphingomonas wittichii)).